Reading from the N-terminus, the 618-residue chain is Glutamine--fructose-6-phosphate aminotransferase [isomerizing] (618 aa).

The active-site Nucleophile; for GATase activity is the cysteine 2. One can recognise a Glutamine amidotransferase type-2 domain in the interval 2–226 (CGIVGYAGRN…DFETAVLSPT (225 aa)). The tract at residues 69–94 (HTRWATHGRPSTKNAHPHNSGGNPGK) is disordered. SIS domains are found at residues 295 to 434 (SEDE…VRDR) and 467 to 608 (CAEG…IDKP). The For Fru-6P isomerization activity role is filled by lysine 613.

As to quaternary structure, homodimer.

It is found in the cytoplasm. It catalyses the reaction D-fructose 6-phosphate + L-glutamine = D-glucosamine 6-phosphate + L-glutamate. Functionally, catalyzes the first step in hexosamine metabolism, converting fructose-6P into glucosamine-6P using glutamine as a nitrogen source. The protein is Glutamine--fructose-6-phosphate aminotransferase [isomerizing] of Methanosarcina acetivorans (strain ATCC 35395 / DSM 2834 / JCM 12185 / C2A).